Consider the following 132-residue polypeptide: Small ribosomal subunit protein uS8 (132 aa).

Belongs to the universal ribosomal protein uS8 family. As to quaternary structure, part of the 30S ribosomal subunit. Contacts proteins S5 and S12.

Functionally, one of the primary rRNA binding proteins, it binds directly to 16S rRNA central domain where it helps coordinate assembly of the platform of the 30S subunit. The protein is Small ribosomal subunit protein uS8 of Tropheryma whipplei (strain Twist) (Whipple's bacillus).